The sequence spans 330 residues: Methionyl-tRNA formyltransferase (330 aa).

A (6S)-5,6,7,8-tetrahydrofolate-binding site is contributed by 112-115 (SLLP).

It belongs to the Fmt family.

The catalysed reaction is L-methionyl-tRNA(fMet) + (6R)-10-formyltetrahydrofolate = N-formyl-L-methionyl-tRNA(fMet) + (6S)-5,6,7,8-tetrahydrofolate + H(+). Functionally, attaches a formyl group to the free amino group of methionyl-tRNA(fMet). The formyl group appears to play a dual role in the initiator identity of N-formylmethionyl-tRNA by promoting its recognition by IF2 and preventing the misappropriation of this tRNA by the elongation apparatus. This chain is Methionyl-tRNA formyltransferase, found in Synechococcus sp. (strain RCC307).